The primary structure comprises 547 residues: Alpha-humulene/(-)-(E)-beta-caryophyllene synthase (547 aa).

5 residues coordinate (2E,6E)-farnesyl diphosphate: arginine 262, aspartate 299, aspartate 303, arginine 442, and aspartate 445. Aspartate 299 and aspartate 303 together coordinate Mg(2+). A DDXXD motif motif is present at residues 299–303 (DDMYD). 4 residues coordinate Mg(2+): aspartate 445, aspartate 446, serine 449, and glutamate 453.

It belongs to the terpene synthase family. Tpsa subfamily. Monomer. The cofactor is Mg(2+). Mn(2+) serves as cofactor. Expressed exclusively in flowers. Expressed in the flower stigmata and also detected in the mesocarp cell layers of the silique wall.

It localises to the cytoplasm. The catalysed reaction is (2E,6E)-farnesyl diphosphate = (-)-(E)-beta-caryophyllene + diphosphate. It catalyses the reaction (2E,6E)-farnesyl diphosphate = alpha-copaene + diphosphate. The enzyme catalyses (2E,6E)-farnesyl diphosphate = alpha-humulene + diphosphate. It carries out the reaction (2E,6E)-farnesyl diphosphate = (1S,2S,4R)-beta-elemene + diphosphate. The protein operates within secondary metabolite biosynthesis; terpenoid biosynthesis. Involved in sesquiterpene (C15) biosynthesis. The major products are beta-caryophyllene and alpha-humulene. Does not convert geranyl diphosphate (GPP) to any monoterpenes. The chain is Alpha-humulene/(-)-(E)-beta-caryophyllene synthase from Arabidopsis thaliana (Mouse-ear cress).